A 525-amino-acid polypeptide reads, in one-letter code: MALDIHAHRILILDFGSQYTQLIARRVREIGVYCELHPFDMDDEAIREFAPKGVILAGGPESVHEANSPRCPQAVFDLGVPVFGICYGMQTMAEQLGGKVAGSELREFGYARVDVVGKSRLLDGIEDHIDADGLFGLDVWMSHGDKVTKLPEDFHILASTPSCPIAGMADDARGYYGVQFHPEVTHTKQGGRILSRFILDICGCEALWTPSKIAEDAIAQVRAQVGTDNVLLGLSGGVDSSVVAALLHKAIGDQLTCVFVDNGLLRLHEGEQVMAMFAENMGVKVIRANAEEQFLNNLEGESDPEKKRKIIGRTFIDVFDAESCKLDNIKYLAQGTIYPDVIESAGAKSGKAHVIKSHHNVGGLPEEMNLKLVEPLRELFKDEVRRLGLELGLPYDMVYRHPFPGPGLGVRILGEVKKEYADLLRRADHIFIEELRKADWYHKVSQAFVVFQPVKSVGVVGDGRRYAWVVALRAVETIDFMTARWAHLPYELLETVSGRIINEIEGISRVTYDVSSKPPATIEWE.

The region spanning 9-207 (RILILDFGSQ…ILDICGCEAL (199 aa)) is the Glutamine amidotransferase type-1 domain. Cysteine 86 functions as the Nucleophile in the catalytic mechanism. Residues histidine 181 and glutamate 183 contribute to the active site. The GMPS ATP-PPase domain occupies 208 to 400 (WTPSKIAEDA…LGLPYDMVYR (193 aa)). 235-241 (SGGVDSS) is an ATP binding site.

Homodimer.

The enzyme catalyses XMP + L-glutamine + ATP + H2O = GMP + L-glutamate + AMP + diphosphate + 2 H(+). It participates in purine metabolism; GMP biosynthesis; GMP from XMP (L-Gln route): step 1/1. Functionally, catalyzes the synthesis of GMP from XMP. In Pseudomonas savastanoi pv. phaseolicola (strain 1448A / Race 6) (Pseudomonas syringae pv. phaseolicola (strain 1448A / Race 6)), this protein is GMP synthase [glutamine-hydrolyzing].